The chain runs to 886 residues: Valine--tRNA ligase (886 aa).

The 'HIGH' region signature appears at 53–63; that stretch reads PNVTGSLHMGH. The 'KMSKS' region signature appears at 540-544; sequence KMSKS. Residue K543 coordinates ATP. A coiled-coil region spans residues 820-851; it reads IDVAAERRRMEKDLAAAQKELASTAAKLANAD.

This sequence belongs to the class-I aminoacyl-tRNA synthetase family. ValS type 1 subfamily. As to quaternary structure, monomer.

Its subcellular location is the cytoplasm. It carries out the reaction tRNA(Val) + L-valine + ATP = L-valyl-tRNA(Val) + AMP + diphosphate. Functionally, catalyzes the attachment of valine to tRNA(Val). As ValRS can inadvertently accommodate and process structurally similar amino acids such as threonine, to avoid such errors, it has a 'posttransfer' editing activity that hydrolyzes mischarged Thr-tRNA(Val) in a tRNA-dependent manner. This chain is Valine--tRNA ligase, found in Mycobacterium leprae (strain TN).